A 128-amino-acid polypeptide reads, in one-letter code: Nascent polypeptide-associated complex protein (128 aa).

One can recognise an NAC-A/B domain in the interval 8 to 75 (PRMLKKMQKM…PKKIKKEKVE (68 aa)).

It belongs to the NAC-alpha family. In terms of assembly, homodimer. Interacts with the ribosome. Binds ribosomal RNA.

Its function is as follows. Contacts the emerging nascent chain on the ribosome. The sequence is that of Nascent polypeptide-associated complex protein from Methanocaldococcus jannaschii (strain ATCC 43067 / DSM 2661 / JAL-1 / JCM 10045 / NBRC 100440) (Methanococcus jannaschii).